The sequence spans 418 residues: Tryptophan synthase beta chain (418 aa).

Positions 1–18 are enriched in polar residues; that stretch reads MTSTLPNASTPDPASLQP. A disordered region spans residues 1–23; it reads MTSTLPNASTPDPASLQPSVRPG. N6-(pyridoxal phosphate)lysine is present on Lys-111.

Belongs to the TrpB family. Tetramer of two alpha and two beta chains. It depends on pyridoxal 5'-phosphate as a cofactor.

The enzyme catalyses (1S,2R)-1-C-(indol-3-yl)glycerol 3-phosphate + L-serine = D-glyceraldehyde 3-phosphate + L-tryptophan + H2O. Its pathway is amino-acid biosynthesis; L-tryptophan biosynthesis; L-tryptophan from chorismate: step 5/5. Its function is as follows. The beta subunit is responsible for the synthesis of L-tryptophan from indole and L-serine. This chain is Tryptophan synthase beta chain, found in Parasynechococcus marenigrum (strain WH8102).